Reading from the N-terminus, the 423-residue chain is AP-1 complex subunit mu-1 (423 aa).

Ser2 carries the post-translational modification N-acetylserine. Phosphothreonine occurs at positions 152, 154, and 223. Residues 168–421 (KNEVFLDVIE…ITQNGDYQLR (254 aa)) form the MHD domain.

It belongs to the adaptor complexes medium subunit family. As to quaternary structure, adaptor protein complex 1 (AP-1) is a heterotetramer composed of two large adaptins (gamma-type subunit AP1G1 and beta-type subunit AP1B1), a medium adaptin (mu-type subunit AP1M1 or AP1M2) and a small adaptin (sigma-type subunit AP1S1 or AP1S2 or AP1S3). Interacts with MARCHF11. Phosphorylation of membrane-bound AP1M1/AP1M2 increases its affinity for sorting signals.

The protein localises to the cytoplasmic vesicle. Its subcellular location is the clathrin-coated vesicle membrane. It is found in the golgi apparatus. Subunit of clathrin-associated adaptor protein complex 1 that plays a role in protein sorting in the trans-Golgi network (TGN) and endosomes. The AP complexes mediate the recruitment of clathrin to membranes and the recognition of sorting signals within the cytosolic tails of transmembrane cargo molecules. This Bos taurus (Bovine) protein is AP-1 complex subunit mu-1.